The sequence spans 49 residues: uncharacterized protein (49 aa).

The protein belongs to the ELIP/psbS family.

Its subcellular location is the plastid. It localises to the cyanelle. In terms of biological role, possible role in chlorophyll and/or carotenoid binding. This is an uncharacterized protein from Cyanophora paradoxa.